The chain runs to 65 residues: uncharacterized protein (65 aa).

This is an uncharacterized protein from Pasteurella multocida (strain Pm70).